The following is a 145-amino-acid chain: Protein H2A.5 (145 aa).

Residues 118–145 are disordered; sequence SPAAAEKEAKSQKAAAKSPKKKTAATKE. Residues 135-138 carry the SPKK motif motif; it reads SPKK. Positions 135–145 are enriched in basic residues; that stretch reads SPKKKTAATKE.

Belongs to the histone H2A family. As to quaternary structure, the nucleosome is a histone octamer containing two molecules each of H2A, H2B, H3 and H4 assembled in one H3-H4 heterotetramer and two H2A-H2B heterodimers. The octamer wraps approximately 147 bp of DNA. As to expression, abundant in meristematic tissues.

It localises to the nucleus. The protein localises to the chromosome. Core component of nucleosome. Nucleosomes wrap and compact DNA into chromatin, limiting DNA accessibility to the cellular machineries which require DNA as a template. Histones thereby play a central role in transcription regulation, DNA repair, DNA replication and chromosomal stability. DNA accessibility is regulated via a complex set of post-translational modifications of histones, also called histone code, and nucleosome remodeling. This chain is Protein H2A.5 (H2A-2), found in Triticum aestivum (Wheat).